Consider the following 225-residue polypeptide: Perlwapin-like protein (225 aa).

An N-terminal signal peptide occupies residues 1-19 (MNHLWLFIVTVSCIYLVYG). Intrachain disulfides connect Cys27/Cys57, Cys36/Cys61, Cys43/Cys56, and Cys49/Cys65. Residues 27–68 (CKVKFMGTACPLGRLVCEEDGDCLGVNQVCCYDGCGTTCHNK) form the WAP 1; atypical domain. Asn67 is a glycosylation site (N-linked (GlcNAc...) asparagine). A WAP 2 domain is found at 117–169 (IIPSPELLCPVVTVRYAFCRFSTYTPCHTSNDCAVPGMKCCPDVCGKRCKFPI). 4 disulfides stabilise this stretch: Cys125–Cys157, Cys135–Cys161, Cys143–Cys156, and Cys149–Cys165. Asn170 carries an N-linked (GlcNAc...) asparagine glycan. Residues 176-225 (QFQQTPLKPTVPLPQYQQTPLQPTVPSSQPPLQPTVPSPQSYNYKGACST) are disordered. A compositionally biased stretch (low complexity) spans 188–201 (LPQYQQTPLQPTVP). Positions 203 to 212 (SQPPLQPTVP) are enriched in pro residues. Residues 213 to 225 (SPQSYNYKGACST) are compositionally biased toward polar residues.

As to expression, component of the acid-soluble organic matrix of calcified layers of the shell (at protein level).

It is found in the secreted. In Lottia gigantea (Giant owl limpet), this protein is Perlwapin-like protein.